The chain runs to 495 residues: Glutamyl-tRNA(Gln) amidotransferase subunit A (495 aa).

Residues lysine 75 and serine 150 each act as charge relay system in the active site. The active-site Acyl-ester intermediate is the serine 174.

Belongs to the amidase family. GatA subfamily. As to quaternary structure, heterotrimer of A, B and C subunits.

It catalyses the reaction L-glutamyl-tRNA(Gln) + L-glutamine + ATP + H2O = L-glutaminyl-tRNA(Gln) + L-glutamate + ADP + phosphate + H(+). Allows the formation of correctly charged Gln-tRNA(Gln) through the transamidation of misacylated Glu-tRNA(Gln) in organisms which lack glutaminyl-tRNA synthetase. The reaction takes place in the presence of glutamine and ATP through an activated gamma-phospho-Glu-tRNA(Gln). This chain is Glutamyl-tRNA(Gln) amidotransferase subunit A, found in Paraburkholderia xenovorans (strain LB400).